A 452-amino-acid polypeptide reads, in one-letter code: Pup--protein ligase (452 aa).

Glutamate 9 lines the Mg(2+) pocket. Residue arginine 53 participates in ATP binding. Tyrosine 55 contacts Mg(2+). Aspartate 57 serves as the catalytic Proton acceptor. A Mg(2+)-binding site is contributed by glutamate 63. ATP contacts are provided by threonine 66 and tryptophan 419.

The protein belongs to the Pup ligase/Pup deamidase family. Pup-conjugating enzyme subfamily.

It catalyses the reaction ATP + [prokaryotic ubiquitin-like protein]-L-glutamate + [protein]-L-lysine = ADP + phosphate + N(6)-([prokaryotic ubiquitin-like protein]-gamma-L-glutamyl)-[protein]-L-lysine.. It functions in the pathway protein degradation; proteasomal Pup-dependent pathway. It participates in protein modification; protein pupylation. Functionally, catalyzes the covalent attachment of the prokaryotic ubiquitin-like protein modifier Pup to the proteasomal substrate proteins, thereby targeting them for proteasomal degradation. This tagging system is termed pupylation. The ligation reaction involves the side-chain carboxylate of the C-terminal glutamate of Pup and the side-chain amino group of a substrate lysine. The protein is Pup--protein ligase of Salinispora arenicola (strain CNS-205).